A 2373-amino-acid polypeptide reads, in one-letter code: Highly reducing polyketide synthase (2373 aa).

Residues 19 to 446 (QEPIAVVGIA…GSNAHVIVEE (428 aa)) enclose the Ketosynthase family 3 (KS3) domain. Residues Cys-192, His-329, and His-369 each act as for beta-ketoacyl synthase activity in the active site. The tract at residues 560 to 874 (IFTGQGAQWP…QYTSAMARGA (315 aa)) is malonyl-CoA:ACP transacylase (MAT) domain. Ser-652 functions as the For malonyltransferase activity in the catalytic mechanism. The tract at residues 942-1078 (HDLLGSKVLG…GLIRIDEDVP (137 aa)) is N-terminal hotdog fold. The segment at 942-1241 (HDLLGSKVLG…LSGLRYTRID (300 aa)) is dehydratase (DH) domain. A PKS/mFAS DH domain is found at 942–1246 (HDLLGSKVLG…YTRIDTGPSV (305 aa)). His-974 acts as the Proton acceptor; for dehydratase activity in catalysis. Positions 1090–1246 (SHQVDASLWH…YTRIDTGPSV (157 aa)) are C-terminal hotdog fold. Asp-1154 functions as the Proton donor; for dehydratase activity in the catalytic mechanism. The tract at residues 1669–1985 (GTTDSLIYSE…SANHIGKIVI (317 aa)) is enoyl reductase (ER) domain. Residues 2010–2187 (GYLLIGGLKG…NSVDLGAIQD (178 aa)) are ketoreductase (KR) domain. The region spanning 2294–2370 (AIHDAVIDVT…QLAQKIVARL (77 aa)) is the Carrier domain. Ser-2330 bears the O-(pantetheine 4'-phosphoryl)serine mark.

Pantetheine 4'-phosphate serves as cofactor.

It participates in mycotoxin biosynthesis. Highly reducing polyketide synthase; part of the gene cluster that mediates the biosynthesis of brefeldin A (BFA), a protein transport inhibitor that shows antiviral, antifungal, and antitumor properties. The proposed biosynthesis of BFA involves formation of an acyclic polyketide chain that is differentially tailored throughout the backbone. The highly reducing polyketide synthase Bref-PKS is proposed to synthesize the precisely reduced octaketide precursor, which could then be directly offloaded by the thiohydrolase enzyme Bref-TH followed by a cytochrome P450 monooxygenase-mediated formation of the cyclopentane ring and macrocyclization to afford 7-deoxy BFA. Alternatively, the first ring annulation can also occur on the ACP-tethered intermediate before the thiohydrolase release and lactonization. The C7-hydroxylation by another cytochrome P450 monooxygenase is believed to be the final step in the process to obtain the final structure of BFA. In addition to the HRPKS Bref-PKS and the thiohydrolase Bref-TH, the brefeldin A biosynthesis cluster contains 4 cytochrome p450 monooxygenases (called orf3 to orf6), as well a the probable cluster-specific transcription regulator orf8. The protein is Highly reducing polyketide synthase of Eupenicillium brefeldianum (Penicillium brefeldianum).